The following is a 119-amino-acid chain: Flagellar transcriptional regulator FlhD (119 aa).

The protein belongs to the FlhD family. In terms of assembly, homodimer; disulfide-linked. Forms a heterohexamer composed of two FlhC and four FlhD subunits. Each FlhC binds a FlhD dimer, forming a heterotrimer, and a hexamer assembles by dimerization of two heterotrimers.

The protein localises to the cytoplasm. Functionally, functions in complex with FlhC as a master transcriptional regulator that regulates transcription of several flagellar and non-flagellar operons by binding to their promoter region. Activates expression of class 2 flagellar genes, including fliA, which is a flagellum-specific sigma factor that turns on the class 3 genes. Also regulates genes whose products function in a variety of physiological pathways. The sequence is that of Flagellar transcriptional regulator FlhD from Shigella boydii serotype 4 (strain Sb227).